The primary structure comprises 240 residues: ATP-dependent dethiobiotin synthetase BioD (240 aa).

Position 13–18 (13–18 (EVGKTV)) interacts with ATP. Residue threonine 17 participates in Mg(2+) binding. Lysine 38 is a catalytic residue. Substrate is bound at residue serine 42. ATP-binding positions include aspartate 55, 116-119 (EGAG), 176-177 (ND), and 205-207 (PWL). Residues aspartate 55 and glutamate 116 each contribute to the Mg(2+) site.

Belongs to the dethiobiotin synthetase family. Homodimer. Mg(2+) serves as cofactor.

It is found in the cytoplasm. The enzyme catalyses (7R,8S)-7,8-diammoniononanoate + CO2 + ATP = (4R,5S)-dethiobiotin + ADP + phosphate + 3 H(+). It functions in the pathway cofactor biosynthesis; biotin biosynthesis; biotin from 7,8-diaminononanoate: step 1/2. In terms of biological role, catalyzes a mechanistically unusual reaction, the ATP-dependent insertion of CO2 between the N7 and N8 nitrogen atoms of 7,8-diaminopelargonic acid (DAPA, also called 7,8-diammoniononanoate) to form a ureido ring. The chain is ATP-dependent dethiobiotin synthetase BioD from Pseudescherichia vulneris (Escherichia vulneris).